The sequence spans 685 residues: Putative mannosyltransferase YycA (685 aa).

The next 6 membrane-spanning stretches (helical) occupy residues 6 to 26 (FDAALILILLAAAFLNTYHIW), 68 to 88 (VLWIQTIFALIFGVHTWSVII), 109 to 129 (FGVGAARIAALVMALTPIAVA), 154 to 174 (AVKQGKLVWLLTAFALIGLAF), 176 to 196 (MKMMQAFMVLPAFVLFYLIAS), and 204 to 224 (IGSLLLSLVLLTGLSLSWAIA). Residues 269-347 (MNAAGGGNMQ…GGGGGKSVNM (79 aa)) form a disordered region. Polar residues predominate over residues 277 to 286 (MQNQDNMQAP). Residues 287–303 (NGNGSSFSQNGNQSFGN) are compositionally biased toward low complexity. A compositionally biased stretch (gly residues) spans 318–343 (LNGGGGTPPTGGNGPGNGGPGGGGGK). 7 helical membrane-spanning segments follow: residues 363–383 (LSGQISWMLPFSLIGLLGAII), 399–419 (TLFWAAWLVPVAGFFSIAGFF), 422–442 (YYLIMLAPPIAALSGIGWYTM), 455–475 (YLLPAAVLITAVFQVYILSAY), 479–499 (IGSVWMYVLGLLGLGITLALL), 513–533 (IISLCVLLLTPVYWSATPLLY), and 573–593 (TGEEYLFATLTTVTAAPYIIY). The interval 652 to 685 (TSDEYSGSSSSTNSVQGMRRGPGGESQQTLYLVE) is disordered. The segment covering 654–665 (DEYSGSSSSTNS) has biased composition (low complexity). The segment covering 676–685 (ESQQTLYLVE) has biased composition (polar residues).

This sequence belongs to the glycosyltransferase 39 family.

It is found in the cell membrane. This is Putative mannosyltransferase YycA (yycA) from Bacillus subtilis (strain 168).